The primary structure comprises 156 residues: Arginine repressor (156 aa).

It belongs to the ArgR family.

The protein localises to the cytoplasm. It functions in the pathway amino-acid biosynthesis; L-arginine biosynthesis [regulation]. Regulates arginine biosynthesis genes. In Erwinia tasmaniensis (strain DSM 17950 / CFBP 7177 / CIP 109463 / NCPPB 4357 / Et1/99), this protein is Arginine repressor.